The following is a 129-amino-acid chain: Glycophorin-A (129 aa).

The first 17 residues, 1–17, serve as a signal peptide directing secretion; that stretch reads MYEKIVIVLLLSGYIST. A Pyrrolidone carboxylic acid modification is found at Gln18. Residues 18-82 lie on the Extracellular side of the membrane; it reads QDVTEIIPHE…QLVHIFSEPV (65 aa). Residues Ser29 and Ser30 are each glycosylated (O-linked (GalNAc...) serine). The O-linked (GalNAc...) threonine glycan is linked to Thr34. O-linked (GalNAc...) serine glycosylation is present at Ser40. O-linked (GalNAc...) threonine glycans are attached at residues Thr41 and Thr48. The O-linked (GalNAc...) serine glycan is linked to Ser56. Residues 83–103 traverse the membrane as a helical segment; sequence IIGIIYAVMLGIIITILSIAF. At 104–129 the chain is on the cytoplasmic side; the sequence is CIGQLTKKSSLPAQVASPEDVDPEVL.

Belongs to the glycophorin-A family. As to quaternary structure, homodimer. Component of the ankyrin-1 complex in the erythrocyte, composed of ANK1, RHCE, RHAG, SLC4A1, EPB42, GYPA, GYPB and AQP1. Interacts with SLC4A1; a GYPA monomer is bound at each end of the SLC4A1 dimer forming a heterotetramer.

The protein resides in the membrane. Component of the ankyrin-1 complex, a multiprotein complex involved in the stability and shape of the erythrocyte membrane. Glycophorin A is the major intrinsic membrane protein of the erythrocyte. The N-terminal glycosylated segment, which lies outside the erythrocyte membrane, has MN blood group receptors. Appears to be important for the function of SLC4A1 and is required for high activity of SLC4A1. May be involved in translocation of SLC4A1 to the plasma membrane. The chain is Glycophorin-A from Canis lupus familiaris (Dog).